The sequence spans 1093 residues: Receptor-mediated endocytosis protein 6 (1093 aa).

Residues 156 to 389 (LKIAQVVCNL…EMMDALLVEK (234 aa)) enclose the Ras-GAP domain. Disordered regions lie at residues 547–610 (DLEK…GGEQ) and 643–669 (RSGSFVKPPPSGIPTSSSEQNLPDVAT). Composition is skewed to polar residues over residues 568-577 (IDFSSGSAET) and 584-598 (DSTSVSPEPLTSTEE). Positions 955-1093 (HHRDKLLRGT…SAVEYIKTIL (139 aa)) constitute a VPS9 domain.

This sequence belongs to the GAPVD1 family. As to quaternary structure, interacts with GDP-bound rab-5. Interacts with alpha-adaptin.

The protein localises to the membrane. It localises to the cytoplasmic vesicle. The protein resides in the clathrin-coated vesicle. Its function is as follows. Acts both as a GTPase-activating protein (GAP) and a guanine nucleotide exchange factor (GEF), and participates in endocytosis. Acts by regulating the activation of rab-5 by exchanging bound GDP for free GTP at clathrin coated pits. The protein is Receptor-mediated endocytosis protein 6 (rme-6) of Caenorhabditis elegans.